Consider the following 583-residue polypeptide: Thiol:disulfide interchange protein DsbD (583 aa).

A signal peptide spans 1-18 (MRRLFLLLFMLFTTLAHA). Intrachain disulfides connect Cys118–Cys124 and Cys186–Cys306. Transmembrane regions (helical) follow at residues 168-188 (GLGL…PCSL), 214-234 (SYVL…ALLG), 245-265 (WVLG…FGFF), 289-309 (LIGC…CMTA), 326-346 (FGGL…LLLV), 359-379 (WMNL…IYML), 382-402 (VLNP…VAYC), and 413-433 (LLHL…MLLV). Residues 458–581 (VTAHDAFTTV…FLQRWTQTRE (124 aa)) form the Thioredoxin domain. Cysteines 496 and 499 form a disulfide.

The protein belongs to the thioredoxin family. DsbD subfamily.

Its subcellular location is the cell inner membrane. It catalyses the reaction [protein]-dithiol + NAD(+) = [protein]-disulfide + NADH + H(+). The enzyme catalyses [protein]-dithiol + NADP(+) = [protein]-disulfide + NADPH + H(+). Required to facilitate the formation of correct disulfide bonds in some periplasmic proteins and for the assembly of the periplasmic c-type cytochromes. Acts by transferring electrons from cytoplasmic thioredoxin to the periplasm. This transfer involves a cascade of disulfide bond formation and reduction steps. This Pseudomonas fluorescens (strain ATCC BAA-477 / NRRL B-23932 / Pf-5) protein is Thiol:disulfide interchange protein DsbD.